We begin with the raw amino-acid sequence, 243 residues long: 1-(5-phosphoribosyl)-5-[(5-phosphoribosylamino)methylideneamino] imidazole-4-carboxamide isomerase (243 aa).

The active-site Proton acceptor is Asp8. Asp129 acts as the Proton donor in catalysis.

Belongs to the HisA/HisF family.

Its subcellular location is the cytoplasm. It catalyses the reaction 1-(5-phospho-beta-D-ribosyl)-5-[(5-phospho-beta-D-ribosylamino)methylideneamino]imidazole-4-carboxamide = 5-[(5-phospho-1-deoxy-D-ribulos-1-ylimino)methylamino]-1-(5-phospho-beta-D-ribosyl)imidazole-4-carboxamide. It participates in amino-acid biosynthesis; L-histidine biosynthesis; L-histidine from 5-phospho-alpha-D-ribose 1-diphosphate: step 4/9. The polypeptide is 1-(5-phosphoribosyl)-5-[(5-phosphoribosylamino)methylideneamino] imidazole-4-carboxamide isomerase (Geobacter sp. (strain M21)).